Reading from the N-terminus, the 208-residue chain is Glutathione S-transferase (208 aa).

The 78-residue stretch at methionine 1–glycine 78 folds into the GST N-terminal domain. Glutathione contacts are provided by residues tyrosine 7, lysine 42, glutamine 49 to leucine 50, and glutamine 62 to serine 63. The GST C-terminal domain occupies asparagine 80 to methionine 200.

The protein belongs to the GST superfamily. Pi family. Homodimer.

The enzyme catalyses RX + glutathione = an S-substituted glutathione + a halide anion + H(+). Its function is as follows. Conjugation of reduced glutathione to a wide number of exogenous and endogenous hydrophobic electrophiles. In Dirofilaria immitis (Canine heartworm), this protein is Glutathione S-transferase.